A 461-amino-acid polypeptide reads, in one-letter code: Bifunctional protein GlmU (461 aa).

The segment at 1–243 (MNATVPSAAP…EDELRGINSR (243 aa)) is pyrophosphorylase. UDP-N-acetyl-alpha-D-glucosamine is bound by residues 24-27 (LAAG), Lys-38, Gln-86, 91-92 (GT), 112-114 (YGD), Gly-155, Glu-169, Asn-184, and Asn-241. Mg(2+) is bound at residue Asp-114. Asn-241 serves as a coordination point for Mg(2+). Positions 244 to 264 (AELAEAEACVQRRLRAAALDG) are linker. Residues 265–461 (GATLVAPETV…AALRRKKEQG (197 aa)) are N-acetyltransferase. Positions 330 and 348 each coordinate UDP-N-acetyl-alpha-D-glucosamine. His-360 serves as the catalytic Proton acceptor. Residues Tyr-363 and Asn-374 each coordinate UDP-N-acetyl-alpha-D-glucosamine. Acetyl-CoA is bound by residues Ala-377, 383–384 (NY), Ser-402, Ala-420, and Arg-437.

In the N-terminal section; belongs to the N-acetylglucosamine-1-phosphate uridyltransferase family. The protein in the C-terminal section; belongs to the transferase hexapeptide repeat family. As to quaternary structure, homotrimer. Requires Mg(2+) as cofactor.

The protein localises to the cytoplasm. The enzyme catalyses alpha-D-glucosamine 1-phosphate + acetyl-CoA = N-acetyl-alpha-D-glucosamine 1-phosphate + CoA + H(+). It carries out the reaction N-acetyl-alpha-D-glucosamine 1-phosphate + UTP + H(+) = UDP-N-acetyl-alpha-D-glucosamine + diphosphate. It functions in the pathway nucleotide-sugar biosynthesis; UDP-N-acetyl-alpha-D-glucosamine biosynthesis; N-acetyl-alpha-D-glucosamine 1-phosphate from alpha-D-glucosamine 6-phosphate (route II): step 2/2. Its pathway is nucleotide-sugar biosynthesis; UDP-N-acetyl-alpha-D-glucosamine biosynthesis; UDP-N-acetyl-alpha-D-glucosamine from N-acetyl-alpha-D-glucosamine 1-phosphate: step 1/1. It participates in bacterial outer membrane biogenesis; LPS lipid A biosynthesis. Its function is as follows. Catalyzes the last two sequential reactions in the de novo biosynthetic pathway for UDP-N-acetylglucosamine (UDP-GlcNAc). The C-terminal domain catalyzes the transfer of acetyl group from acetyl coenzyme A to glucosamine-1-phosphate (GlcN-1-P) to produce N-acetylglucosamine-1-phosphate (GlcNAc-1-P), which is converted into UDP-GlcNAc by the transfer of uridine 5-monophosphate (from uridine 5-triphosphate), a reaction catalyzed by the N-terminal domain. The sequence is that of Bifunctional protein GlmU from Gluconacetobacter diazotrophicus (strain ATCC 49037 / DSM 5601 / CCUG 37298 / CIP 103539 / LMG 7603 / PAl5).